The chain runs to 468 residues: Argininosuccinate lyase (468 aa).

The 2-(N(omega)-L-arginino)succinate site is built by S33, N121, and T166. Catalysis depends on H167, which acts as the Proton acceptor. Catalysis depends on S288, which acts as the Proton donor. Positions 296, 328, 333, and 336 each coordinate 2-(N(omega)-L-arginino)succinate.

It belongs to the lyase 1 family. Argininosuccinate lyase subfamily. Homotetramer.

The catalysed reaction is 2-(N(omega)-L-arginino)succinate = fumarate + L-arginine. It participates in amino-acid biosynthesis; L-arginine biosynthesis; L-arginine from L-ornithine and carbamoyl phosphate: step 3/3. This is Argininosuccinate lyase (ARG4) from Candida albicans (Yeast).